We begin with the raw amino-acid sequence, 868 residues long: MLKGIHKYLLMCFGTVLFTVQANAARIMSNNPIKEDWQCKVVDGEWSCKRAKKPKSVFDKKLTKTEKEKALADDLAWVKKPSYFVGGYYSNDNQFTKALCESKKTDLSYEKSEFDNYGTLIASGNVQVLQCDQELYGNNAIINLNSNNSAIRSLVMAGDVIVKQPSTGIVIRTTELDADMNNGTYSTGEAYFRLAREMPKTRIYDKEHFSGYLRGYAKTFKKESSGDIVLSDGYITSGDPYDNAWKITGNNIDIDTNTHMAYVKNGYFEIQDIPVMYIPYFSHPIDDRRRSGFLYPGFVQNANSGIGISVPYYFNLAPNYDLMLQSVIWSQRGIIENGTFRYMTKYFQGQFEGSLVPYDFKEGKMRGSFTLSTTGQYENINTNFKYEYVSDQNYYNDFSAGNVNLVTKTLLDREFDLTYTNDYVDSGLTVLDYGVVNPLLTVDNTPYAKLPEVKLNLTSDGYTPDYLTLSAQTLNTFFYKTAGPANTNPGAPQGTNVNAFRAYESPKIAFNFNKTWGYLNPSLEVPIRYYQLKNSPTDTIQFANSSVTSVLPIFNIDAGAYFDKDYTNENGTYTSTLHPRLFYTYIPYQDQTNIPLFDTSLQNEQYMQMFQVNRFTGYDRINNANQLTYAIEASTTNQDNGTTLASAKIGQMAYFADRKVNLCQGNSACPNPGLMDPFSTDTFSPIMSSFEFQVMKNIYLSAQVNYRVNQQNVDYQVYQLSYKDENENIFNVSYNNIANNWNSLTQQQIAEGAKPQPQETITLSTVLNITDHWGIAALWNYNFQQKQIANIFAGLQYNAKSWAVRALWQKTAYTNQDPNNPTLLGPLVNTYMFEFELKGLGGIGNTSDISSRLQQINGYQVGEWGNGI.

The N-terminal stretch at 1–24 is a signal peptide; it reads MLKGIHKYLLMCFGTVLFTVQANA.

Belongs to the LptD family. In terms of assembly, component of the lipopolysaccharide transport and assembly complex. Interacts with LptE and LptA.

The protein localises to the cell outer membrane. In terms of biological role, together with LptE, is involved in the assembly of lipopolysaccharide (LPS) at the surface of the outer membrane. This Francisella tularensis subsp. tularensis (strain FSC 198) protein is LPS-assembly protein LptD.